A 373-amino-acid chain; its full sequence is GDP-mannose 4,6 dehydratase 2 (373 aa).

Residues 1-15 (MASENNGSRSDSESI) are compositionally biased toward polar residues. Residues 1–21 (MASENNGSRSDSESITAPKAD) form a disordered region. NADP(+)-binding positions include 35–40 (GITGQD), Arg-60, 91–92 (DL), 113–117 (LAAQS), and Tyr-128. Ser-117 provides a ligand contact to substrate. Ser-162 provides a ligand contact to substrate. Ser-162 is a catalytic residue. Active-site nucleophile residues include Glu-164 and Tyr-185. Tyr-185 serves as a coordination point for substrate. Position 189 (Lys-189) interacts with NADP(+). Asn-214 is a binding site for substrate. 2 residues coordinate NADP(+): His-215 and Arg-220. Residues 220–228 (RGENFVTRK), Gly-247, Arg-253, and 314–317 (RPAE) each bind substrate.

The protein belongs to the NAD(P)-dependent epimerase/dehydratase family. GDP-mannose 4,6-dehydratase subfamily. Homotetramer. Binds to GER1. NADP(+) is required as a cofactor. In terms of tissue distribution, expressed in roots, flowers, siliques, leaves and stems. Not expressed in the root meristem and the proximal part of the elongation zone, or in emerging lateral roots. Expressed in trichomes and guard cells, and in pollen just before anthesis.

The catalysed reaction is GDP-alpha-D-mannose = GDP-4-dehydro-alpha-D-rhamnose + H2O. It functions in the pathway nucleotide-sugar biosynthesis; GDP-L-fucose biosynthesis via de novo pathway; GDP-L-fucose from GDP-alpha-D-mannose: step 1/2. Functionally, catalyzes the conversion of GDP-D-mannose to GDP-4-dehydro-6-deoxy-D-mannose. In Arabidopsis thaliana (Mouse-ear cress), this protein is GDP-mannose 4,6 dehydratase 2 (MUR1).